The following is a 524-amino-acid chain: M-phase inducer phosphatase 1 (524 aa).

The Phosphodegron signature appears at Met-74 to Phe-84. The residue at position 76 (Ser-76) is a Phosphoserine; by CHEK1. A phosphoserine; by NEK11 mark is found at Ser-79, Ser-82, and Ser-88. Phosphoserine is present on Ser-107. Ser-124 carries the post-translational modification Phosphoserine; by CHEK1 and CHEK2. A KEN box motif is present at residues Lys-141–Asn-143. The residue at position 178 (Ser-178) is a Phosphoserine; by CHEK1. The tract at residues Leu-264–Ser-317 is disordered. Residues Ser-279 and Ser-293 each carry the phosphoserine; by CHEK1 and CHEK2 modification. Basic and acidic residues predominate over residues Thr-303–Leu-312. Residue Ser-321 is modified to Phosphoserine. The Rhodanese domain occupies Leu-376–Glu-482. Cys-431 is an active-site residue. Thr-507 is modified (phosphothreonine; by CHEK1). Phosphoserine; by PLK3 occurs at positions 513 and 519.

The protein belongs to the MPI phosphatase family. As to quaternary structure, interacts with CCNB1/cyclin B1. Interacts with YWHAE/14-3-3 epsilon when phosphorylated. Interacts with CUL1 specifically when CUL1 is neddylated and active. Interacts with BTRC/BTRCP1 and FBXW11/BTRCP2. Interactions with CUL1, BTRC and FBXW11 are enhanced upon DNA damage. Interacts with CHEK2; mediates CDC25A phosphorylation and degradation in response to infrared-induced DNA damages. Interacts with HSP90AB1; prevents heat shock-mediated CDC25A degradation and contributes to cell cycle progression. Post-translationally, phosphorylated by CHEK1 on Ser-76, Ser-124, Ser-178, Ser-279, Ser-293 and Thr-507 during checkpoint mediated cell cycle arrest. Also phosphorylated by CHEK2 on Ser-124, Ser-279, and Ser-293 during checkpoint mediated cell cycle arrest. Phosphorylation on Ser-178 and Thr-507 creates binding sites for YWHAE/14-3-3 epsilon which inhibits CDC25A. Phosphorylation on Ser-76, Ser-124, Ser-178, Ser-279 and Ser-293 may also promote ubiquitin-dependent proteolysis of CDC25A by the SCF complex. Phosphorylation of CDC25A at Ser-76 by CHEK1 primes it for subsequent phosphorylation at Ser-79, Ser-82 and Ser-88 by NEK11. Phosphorylation by NEK11 is required for BTRC-mediated polyubiquitination and degradation. Phosphorylation by PIM1 leads to an increase in phosphatase activity. Phosphorylated by PLK3 following DNA damage, leading to promote its ubiquitination and degradation. In terms of processing, ubiquitinated by the anaphase promoting complex/cyclosome (APC/C) ubiquitin ligase complex that contains FZR1/CDH1 during G1 phase leading to its degradation by the proteasome. Ubiquitinated by a SCF complex containing BTRC and FBXW11 during S phase leading to its degradation by the proteasome. Deubiquitination by USP17L2/DUB3 leads to its stabilization.

The enzyme catalyses O-phospho-L-tyrosyl-[protein] + H2O = L-tyrosyl-[protein] + phosphate. Its activity is regulated as follows. Stimulated by B-type cyclins. Stimulated by PIM1-mediated phosphorylation. In terms of biological role, tyrosine protein phosphatase which functions as a dosage-dependent inducer of mitotic progression. Directly dephosphorylates CDK1 and stimulates its kinase activity. Also dephosphorylates CDK2 in complex with cyclin-E, in vitro. In Homo sapiens (Human), this protein is M-phase inducer phosphatase 1 (CDC25A).